Consider the following 208-residue polypeptide: 3-demethoxyubiquinol 3-hydroxylase (208 aa).

Fe cation contacts are provided by glutamate 57, glutamate 87, histidine 90, glutamate 139, glutamate 171, and histidine 174.

It belongs to the COQ7 family. Fe cation is required as a cofactor.

Its subcellular location is the cell membrane. The enzyme catalyses a 5-methoxy-2-methyl-3-(all-trans-polyprenyl)benzene-1,4-diol + AH2 + O2 = a 3-demethylubiquinol + A + H2O. Its pathway is cofactor biosynthesis; ubiquinone biosynthesis. In terms of biological role, catalyzes the hydroxylation of 2-nonaprenyl-3-methyl-6-methoxy-1,4-benzoquinol during ubiquinone biosynthesis. The sequence is that of 3-demethoxyubiquinol 3-hydroxylase from Burkholderia vietnamiensis (strain G4 / LMG 22486) (Burkholderia cepacia (strain R1808)).